Consider the following 326-residue polypeptide: ATP-dependent 6-phosphofructokinase (326 aa).

G12 is a binding site for ATP. 22 to 26 (RAIIK) is a binding site for ADP. Residues 73–74 (RF) and 103–106 (GDGS) each bind ATP. D104 lines the Mg(2+) pocket. 126 to 128 (TID) provides a ligand contact to substrate. Catalysis depends on D128, which acts as the Proton acceptor. Residue R155 coordinates ADP. Substrate contacts are provided by residues R163 and 170-172 (MGH). ADP-binding positions include 186–188 (GSE), K212, and 215–217 (KRS). Substrate contacts are provided by residues E224, K246, and 252–255 (HIQR).

This sequence belongs to the phosphofructokinase type A (PFKA) family. ATP-dependent PFK group I subfamily. Prokaryotic clade 'B1' sub-subfamily. Homotetramer. Requires Mg(2+) as cofactor.

It is found in the cytoplasm. It catalyses the reaction beta-D-fructose 6-phosphate + ATP = beta-D-fructose 1,6-bisphosphate + ADP + H(+). The protein operates within carbohydrate degradation; glycolysis; D-glyceraldehyde 3-phosphate and glycerone phosphate from D-glucose: step 3/4. With respect to regulation, allosterically activated by ADP and other diphosphonucleosides, and allosterically inhibited by phosphoenolpyruvate. In terms of biological role, catalyzes the phosphorylation of D-fructose 6-phosphate to fructose 1,6-bisphosphate by ATP, the first committing step of glycolysis. The protein is ATP-dependent 6-phosphofructokinase of Mycoplasmopsis pulmonis (strain UAB CTIP) (Mycoplasma pulmonis).